Consider the following 218-residue polypeptide: MTQDEMKKAAGWAALEYVEKDSIVGVGTGSTVNHFIDALATMKADIDGAVSSSEASTEKMKALGIPVYDLNSVDELSVYVDGADEINAHMDMIKGGGAALTREKIVAAVADKFICIVDNTKEVDVLGEFPLPVEVIPMARSYVARQLVKLGGDPVYREGVVTDNGNVILDVYNMKIMNPKELEEQINAIVGVVTNGLFAMRGADVLLVGSPEGVKTVK.

Substrate-binding positions include 28–31, 81–84, and 94–97; these read TGST, DGAD, and KGGG. The Proton acceptor role is filled by glutamate 103. Residue lysine 121 participates in substrate binding.

The protein belongs to the ribose 5-phosphate isomerase family. Homodimer.

It carries out the reaction aldehydo-D-ribose 5-phosphate = D-ribulose 5-phosphate. Its pathway is carbohydrate degradation; pentose phosphate pathway; D-ribose 5-phosphate from D-ribulose 5-phosphate (non-oxidative stage): step 1/1. Its function is as follows. Catalyzes the reversible conversion of ribose-5-phosphate to ribulose 5-phosphate. The chain is Ribose-5-phosphate isomerase A from Shewanella sediminis (strain HAW-EB3).